We begin with the raw amino-acid sequence, 300 residues long: MKLKLLLIPLLGSSLLLSACSSATSQVISSLSSAQKYFEANKGELNKKNVINILKDGYNSDPNKTVNALLAGWKYTLMDQKLLERNLDASRFASAFGSTSKKDDITPNISEKSLFLADTFPGISSEIAKVFKVEKQTVSGFSYSWNSPKKFQVNIQIKMDGKIDESSKALIKSFLEGNSSGGKGSNGKNSIDESEYTGEKAKFTGNFIFTYTPPTGGARNFSDKSFDVPTSSINFPANVKIDVTTSHTKLNELLESNEQVKKMKSRQLTGKLFNLLPFFTTLCFNSFSPFTVFAVIFTIV.

Residues 1–19 form the signal peptide; the sequence is MKLKLLLIPLLGSSLLLSA. C20 is lipidated: N-palmitoyl cysteine. Residue C20 is the site of S-diacylglycerol cysteine attachment.

It belongs to the MG439/MG440 family.

It localises to the cell membrane. This is an uncharacterized protein from Mycoplasma pneumoniae (strain ATCC 29342 / M129 / Subtype 1) (Mycoplasmoides pneumoniae).